Consider the following 1190-residue polypeptide: PAN2-PAN3 deadenylation complex catalytic subunit PAN2 (1190 aa).

WD repeat units lie at residues 24–63 (TTIVNITSLQFDSVQNFIWCGDSRGYTRSFTGSFATNSLY), 129–166 (NKFNNLQAMTFNCNSFNDVVVGTDTSMMKFDLNKPNVL), 167–207 (SSFD…TMKT), 222–264 (GNYI…AIAP), 266–306 (PFPA…NVYL), and 322–361 (NNKPRMSNLEISENGDFLVFNDNCDNMHLWSISPSSKDFV). A linker region spans residues 364 to 511 (PQPVEQPDII…FQYKFQGKLN (148 aa)). One can recognise a USP domain in the interval 512 to 924 (KVPNCYSRLQ…KPIVIMYQQT (413 aa)). In terms of domain architecture, Exonuclease spans 988–1158 (VAIDAEFVML…EDANTALLLY (171 aa)). A divalent metal cation-binding residues include aspartate 991, glutamate 993, aspartate 1097, and aspartate 1150.

The protein belongs to the peptidase C19 family. PAN2 subfamily. As to quaternary structure, forms a heterotrimer with an asymmetric homodimer of the regulatory subunit PAN3 to form the poly(A)-nuclease (PAN) deadenylation complex. A divalent metal cation serves as cofactor.

It is found in the cytoplasm. It catalyses the reaction Exonucleolytic cleavage of poly(A) to 5'-AMP.. Its activity is regulated as follows. Positively regulated by the regulatory subunit PAN3. Its function is as follows. Catalytic subunit of the poly(A)-nuclease (PAN) deadenylation complex, one of two cytoplasmic mRNA deadenylases involved in mRNA turnover. PAN specifically shortens poly(A) tails of RNA and the activity is stimulated by poly(A)-binding protein PAB1. PAN deadenylation is followed by rapid degradation of the shortened mRNA tails by the CCR4-NOT complex. Deadenylated mRNAs are then degraded by two alternative mechanisms, namely exosome-mediated 3'-5' exonucleolytic degradation, or deadenylation-dependent mRNA decaping and subsequent 5'-3' exonucleolytic degradation by XRN1. May also be involved in post-transcriptional maturation of mRNA poly(A) tails. The sequence is that of PAN2-PAN3 deadenylation complex catalytic subunit PAN2 from Candida albicans (strain SC5314 / ATCC MYA-2876) (Yeast).